Reading from the N-terminus, the 262-residue chain is Membrane protein US15 (262 aa).

A run of 7 helical transmembrane segments spans residues 46–66 (GAVG…CYAA), 77–97 (CLTE…VIFI), 108–128 (IGVL…ICLC), 133–153 (LVIS…GVAL), 163–183 (QIVV…VVIL), 186–206 (GWSW…CLAV), and 226–246 (LLAA…VLRI).

This sequence belongs to the HHV-5 US12 protein family.

Its subcellular location is the host membrane. The polypeptide is Membrane protein US15 (US15) (Human cytomegalovirus (strain Merlin) (HHV-5)).